The chain runs to 290 residues: 4-diphosphocytidyl-2-C-methyl-D-erythritol kinase (290 aa).

Residue lysine 10 is part of the active site. 95–105 (PVAAGLAGGSS) contributes to the ATP binding site. Residue aspartate 137 is part of the active site.

It belongs to the GHMP kinase family. IspE subfamily.

It carries out the reaction 4-CDP-2-C-methyl-D-erythritol + ATP = 4-CDP-2-C-methyl-D-erythritol 2-phosphate + ADP + H(+). It functions in the pathway isoprenoid biosynthesis; isopentenyl diphosphate biosynthesis via DXP pathway; isopentenyl diphosphate from 1-deoxy-D-xylulose 5-phosphate: step 3/6. Catalyzes the phosphorylation of the position 2 hydroxy group of 4-diphosphocytidyl-2C-methyl-D-erythritol. The polypeptide is 4-diphosphocytidyl-2-C-methyl-D-erythritol kinase (Geobacillus kaustophilus (strain HTA426)).